The sequence spans 342 residues: MSEESDSLRTSPSVASLSENELPPPPEPPGYVCSLTEDLVTKAREELQEKPEWRLRDVQALRDMVRKEYPNLSTSLDDAFLLRFLRARKFDYDRALQLLVNYHSCRRSWPEVFNNLKPSALKDVLASGFLTVLPHTDPRGCHVVCIRPDRWIPSNYPITENIRAIYLTLEKLIQSEETQVNGIVILADYKGVSLSKASHFGPFIAKKVIGILQDGFPIRIKAVHVVNEPRIFKGIFAIIKPFLKEKIANRFFLHGSDLNSLHTNLPRSILPKEYGGTAGELDTATWNAVLLASEDDFVKEFCQPVPACDSILGQTLLPEGLTSDAQCDDSLRAVKSQLYSCY.

Residues 1 to 31 (MSEESDSLRTSPSVASLSENELPPPPEPPGY) form a disordered region. Residues 8–19 (LRTSPSVASLSE) show a composition bias toward polar residues. In terms of domain architecture, CRAL-TRIO spans 117 to 282 (KPSALKDVLA…EYGGTAGELD (166 aa)).

In terms of biological role, may act as a protein that binds a hydrophobic ligand. The chain is Alpha-tocopherol transfer protein-like (TTPAL) from Homo sapiens (Human).